The primary structure comprises 175 residues: NADH-ubiquinone oxidoreductase chain 6 (175 aa).

5 helical membrane-spanning segments follow: residues M1–S21, S24–V44, F46–V66, I86–L106, and Y149–I169.

The protein belongs to the complex I subunit 6 family. Core subunit of respiratory chain NADH dehydrogenase (Complex I) which is composed of 45 different subunits.

It localises to the mitochondrion inner membrane. The catalysed reaction is a ubiquinone + NADH + 5 H(+)(in) = a ubiquinol + NAD(+) + 4 H(+)(out). Its function is as follows. Core subunit of the mitochondrial membrane respiratory chain NADH dehydrogenase (Complex I) which catalyzes electron transfer from NADH through the respiratory chain, using ubiquinone as an electron acceptor. Essential for the catalytic activity and assembly of complex I. The polypeptide is NADH-ubiquinone oxidoreductase chain 6 (MT-ND6) (Dugong dugon (Dugong)).